Reading from the N-terminus, the 242-residue chain is Uridylate kinase (242 aa).

Residue 11-14 coordinates ATP; sequence KLSG. UMP is bound at residue Gly53. ATP contacts are provided by Gly54 and Arg58. Residues Asp73 and 134–141 each bind UMP; that span reads SGNPFFTT. Residues Thr161, Tyr167, and Asp170 each coordinate ATP.

It belongs to the UMP kinase family. As to quaternary structure, homohexamer.

Its subcellular location is the cytoplasm. It carries out the reaction UMP + ATP = UDP + ADP. Its pathway is pyrimidine metabolism; CTP biosynthesis via de novo pathway; UDP from UMP (UMPK route): step 1/1. Inhibited by UTP. Its function is as follows. Catalyzes the reversible phosphorylation of UMP to UDP. The sequence is that of Uridylate kinase from Thermosynechococcus vestitus (strain NIES-2133 / IAM M-273 / BP-1).